We begin with the raw amino-acid sequence, 459 residues long: DNA damage-inducible protein F (459 aa).

Transmembrane regions (helical) follow at residues 2-22 (PPGV…MAFL), 29-49 (LWHL…LGLV), 63-83 (LGGV…LLFL), 111-131 (LLLA…IIDL), 154-174 (WLSA…LGVQ), 180-200 (VILL…LVMG), 207-227 (GAAL…LLMV), 265-285 (LLQL…SDII), 289-309 (AVLM…AYAV), 338-358 (IVAL…IALL), 373-393 (IWQV…GMFI), and 416-436 (LLTL…VFLA).

Belongs to the multi antimicrobial extrusion (MATE) (TC 2.A.66.1) family.

Its subcellular location is the cell inner membrane. This Escherichia coli (strain K12) protein is DNA damage-inducible protein F (dinF).